Consider the following 182-residue polypeptide: NADH-quinone oxidoreductase subunit B (182 aa).

[4Fe-4S] cluster contacts are provided by Cys47, Cys48, Cys113, and Cys142.

Belongs to the complex I 20 kDa subunit family. NDH-1 is composed of 14 different subunits. Subunits NuoB, C, D, E, F, and G constitute the peripheral sector of the complex. It depends on [4Fe-4S] cluster as a cofactor.

It localises to the cell inner membrane. It catalyses the reaction a quinone + NADH + 5 H(+)(in) = a quinol + NAD(+) + 4 H(+)(out). Its function is as follows. NDH-1 shuttles electrons from NADH, via FMN and iron-sulfur (Fe-S) centers, to quinones in the respiratory chain. The immediate electron acceptor for the enzyme in this species is believed to be ubiquinone. Couples the redox reaction to proton translocation (for every two electrons transferred, four hydrogen ions are translocated across the cytoplasmic membrane), and thus conserves the redox energy in a proton gradient. In Anaeromyxobacter dehalogenans (strain 2CP-1 / ATCC BAA-258), this protein is NADH-quinone oxidoreductase subunit B.